The primary structure comprises 372 residues: Glutamate 5-kinase (372 aa).

Lysine 14 contacts ATP. Substrate-binding residues include serine 54, aspartate 141, and asparagine 153. Position 173–174 (173–174 (TD)) interacts with ATP. A PUA domain is found at 280-358 (RGTVVIDDGA…SQIESLLGYS (79 aa)).

It belongs to the glutamate 5-kinase family.

The protein resides in the cytoplasm. The catalysed reaction is L-glutamate + ATP = L-glutamyl 5-phosphate + ADP. Its pathway is amino-acid biosynthesis; L-proline biosynthesis; L-glutamate 5-semialdehyde from L-glutamate: step 1/2. Catalyzes the transfer of a phosphate group to glutamate to form L-glutamate 5-phosphate. This Methylibium petroleiphilum (strain ATCC BAA-1232 / LMG 22953 / PM1) protein is Glutamate 5-kinase.